The primary structure comprises 148 residues: Large ribosomal subunit protein bL9 (148 aa).

It belongs to the bacterial ribosomal protein bL9 family.

In terms of biological role, binds to the 23S rRNA. This is Large ribosomal subunit protein bL9 from Clostridium beijerinckii (strain ATCC 51743 / NCIMB 8052) (Clostridium acetobutylicum).